A 379-amino-acid chain; its full sequence is MNVFWFLPTHGDGHYLGTTKGARPVTLNYLKQVAQAADDLGYYGVLIPTGRSCEDSWVIASALVPLTERLKYLVAIRPGIISPTVSARMAATLDRLSGGRLLINVVTGGDPDENRGDGSFLDHSERYEVTDEFLKIWRRVLQGEAVDFEGKHLRVQNAKALYPPIQKPYPPLYFGGSSDAAHDLAADQVDVYLTWGEPPAAVAQKLADVRERAARKGRTVKFGIRLHVIVRETSEEAWKAASTLIEHISDETIAAAQKSFSRFDSEGQRRMAALHDGRRDNLEIAPNLWAGVGLVRGGAGTALVGNPQEVAARIKEYADLGIDSFIFSGYPHLEEAYRFAELVFPLLPEPYASLAGRGITNLTGPFGEMIANDLPPQAK.

It belongs to the SsuD family.

It carries out the reaction an alkanesulfonate + FMNH2 + O2 = an aldehyde + FMN + sulfite + H2O + 2 H(+). Functionally, catalyzes the desulfonation of aliphatic sulfonates. The protein is Alkanesulfonate monooxygenase of Pseudomonas savastanoi pv. phaseolicola (strain 1448A / Race 6) (Pseudomonas syringae pv. phaseolicola (strain 1448A / Race 6)).